The chain runs to 457 residues: 4-hydroxybenzoate transporter PcaK (457 aa).

The Cytoplasmic portion of the chain corresponds to 1 to 34 (MPKEANMASQDYATQRSSLDAQALINDAPLSRYQ). The helical transmembrane segment at 35 to 55 (WLIAIVCFLIVFVDGIDTAAM) threads the bilayer. At 56–72 (GFIAPALAQDWGVDRSQ) the chain is on the periplasmic side. Residues 73–93 (LGPVMSAALGGMIIGALVSGP) form a helical membrane-spanning segment. Residues 94 to 101 (TADRFGRK) are Cytoplasmic-facing. A helical membrane pass occupies residues 102-122 (IVLSMSMLVFGGFTLACAYST). The Periplasmic segment spans residues 123–128 (NLDSLV). The helical transmembrane segment at 129-149 (IFRFLTGIGLGAAMPNATTLF) threads the bilayer. Residues 150-168 (SEYCPARIRSLLVTCMFCG) lie on the Cytoplasmic side of the membrane. Residues 169–189 (YNLGMAIGGFISSWLIPAFGW) traverse the membrane as a helical segment. At 190 to 191 (HS) the chain is on the periplasmic side. A helical transmembrane segment spans residues 192-212 (LFLLGGWAPLILMLLVIFFLP). Residues 213-274 (ESYRFLIVKG…LFSAKYVKGT (62 aa)) are Cytoplasmic-facing. A helical membrane pass occupies residues 275-295 (VLLWVTYFMGLVMIYLLTSWL). The Periplasmic portion of the chain corresponds to 296-310 (PTLMRETGASLERAA). Residues 311–331 (FLGGLFQFGGVLSALFIGWAM) traverse the membrane as a helical segment. Topologically, residues 332 to 338 (DRFNPNR) are cytoplasmic. A helical membrane pass occupies residues 339–359 (IIAGFYLAAGIFAVIVGQSLS). The Periplasmic portion of the chain corresponds to 360–363 (NPTL). The helical transmembrane segment at 364–384 (LALFILCAGIAVNGAQSSMPV) threads the bilayer. At 385–400 (LSARFYPTQCRATGVA) the chain is on the cytoplasmic side. A helical membrane pass occupies residues 401–421 (WMSGIGRFGAVFGAWIGAVLL). Residues 422 to 426 (GNNWS) are Periplasmic-facing. The helical transmembrane segment at 427-447 (FTMILSMLIIPAAAAAIAIFV) threads the bilayer. The Cytoplasmic segment spans residues 448 to 457 (KSLVAHTDAT).

The protein belongs to the major facilitator superfamily. Aromatic acid:H(+) symporter (AAHS) (TC 2.A.1.15) family. In terms of assembly, homotrimer.

It localises to the cell inner membrane. Its function is as follows. Uptake of 4-hydroxybenzoate (4-HB). Can also transport a variety of aromatic acids with hydroxyl substitutions at the 2-, 3- and 4-positions, such as salicylate, 2,4-dihydroxybenzoate, protocatechuate, 3-hydroxybenzoate, vanillate and gentisate. The chain is 4-hydroxybenzoate transporter PcaK from Acinetobacter baylyi (strain ATCC 33305 / BD413 / ADP1).